A 293-amino-acid chain; its full sequence is Short-chain dehydrogenase/reductase PhomF' (293 aa).

Residues Ile31 and Asn102 each contribute to the NADP(+) site. Residue Ser175 is the Proton donor of the active site. The NADP(+) site is built by Tyr190, Lys194, and Ser225. The Proton acceptor role is filled by Tyr190. Lys194 serves as the catalytic Lowers pKa of active site Tyr.

The protein belongs to the short-chain dehydrogenases/reductases (SDR) family.

In terms of biological role, short-chain dehydrogenase/reductase; part of the gene cluster that mediates the biosynthesis of the phomopsins, a group of hexapeptide mycotoxins which infects lupins and causes lupinosis disease in livestock. The role of phomF' within the phomopsins biosynthesis pathway has still to be determined. The pathway starts with the processing of the precursor phomA by several endopeptidases including kexin proteases as well as the cluster-specific S41 family peptidase phomP1 and the oligopeptidase phomG to produce 10 identical copies of the hexapeptide Tyr-Val-Ile-Pro-Ile-Asp. After being excised from the precursor peptide, the core peptides are cyclized and modified post-translationally by enzymes encoded within the gene cluster. The timing and order of proteolysis of the phomA precursor and PTMs are still unknown. Two tyrosinase-like enzymes, phomQ1 and phomQ2, catalyze the chlorination and hydroxylation of Tyr, respectively. PhomYb, is proposed to be involved in the construction of the macrocyclic structure. The other 4 ustYa family proteins may be involved in PTMs that generate the unique structure of phomopsin A. PhomYa is required for the hydroxylation of C-beta of Tyr. PhomYc, phomYd, and phomYe are responsible for the biosynthesis of 2,3-dehydroisoleucine (dIle), 2,3-dehydroaspartic acid (dAsp), and 3,4-dehydroproline (dPro), respectively. While dIle formation by phomYc is indispensable for the installation of dAsp by phomYd, the order of the other PTMs have not been elucidated yet. Most of the biosynthetic enzymes likely have broad substrate specificity, and thus, there might be a metabolic grid from a precursor to phomopsin A. The enzyme(s) responsible for the biosynthesis of 3,4-dehydrovaline (dVal) have also not been identified yet. Finally, phomM acts as an S-adenosylmethionine-dependent alpha-N-methyltransferase that catalyzes two successive N-methylation reactions, converting N-desmethyl-phomopsin A to phomopsin A and phomopsin A further to an N,N-dimethylated congener called phomopsin E. In Diaporthe leptostromiformis (Lupinosis disease fungus), this protein is Short-chain dehydrogenase/reductase PhomF'.